Reading from the N-terminus, the 430-residue chain is Serine--tRNA ligase (430 aa).

Residues 103 to 127 are disordered; that stretch reads LPNIPDDDVPDGRDENDNQEVSRWG. Residue 237–239 coordinates L-serine; sequence TAE. Residue 268 to 270 participates in ATP binding; the sequence is RSE. Glutamate 291 contributes to the L-serine binding site. Position 355-358 (355-358) interacts with ATP; the sequence is EISS. L-serine is bound at residue serine 391.

Belongs to the class-II aminoacyl-tRNA synthetase family. Type-1 seryl-tRNA synthetase subfamily. As to quaternary structure, homodimer. The tRNA molecule binds across the dimer.

It localises to the cytoplasm. The catalysed reaction is tRNA(Ser) + L-serine + ATP = L-seryl-tRNA(Ser) + AMP + diphosphate + H(+). It catalyses the reaction tRNA(Sec) + L-serine + ATP = L-seryl-tRNA(Sec) + AMP + diphosphate + H(+). It functions in the pathway aminoacyl-tRNA biosynthesis; selenocysteinyl-tRNA(Sec) biosynthesis; L-seryl-tRNA(Sec) from L-serine and tRNA(Sec): step 1/1. In terms of biological role, catalyzes the attachment of serine to tRNA(Ser). Is also able to aminoacylate tRNA(Sec) with serine, to form the misacylated tRNA L-seryl-tRNA(Sec), which will be further converted into selenocysteinyl-tRNA(Sec). The chain is Serine--tRNA ligase from Sodalis glossinidius (strain morsitans).